The primary structure comprises 355 residues: Aromatic amino acid aminotransferase (355 aa).

N6-(pyridoxal phosphate)lysine is present on K217.

This sequence belongs to the class-II pyridoxal-phosphate-dependent aminotransferase family. Homodimer. It depends on pyridoxal 5'-phosphate as a cofactor.

The catalysed reaction is an aromatic L-alpha-amino acid + 2-oxoglutarate = an aromatic oxo-acid + L-glutamate. Its function is as follows. Aminotransferase that catalyzes the conversion of aromatic amino acids and 2-oxoglutarate into corresponding aromatic oxo acids and L-glutamate. In Mycolicibacterium paratuberculosis (strain ATCC BAA-968 / K-10) (Mycobacterium paratuberculosis), this protein is Aromatic amino acid aminotransferase.